A 535-amino-acid chain; its full sequence is T-complex protein 1 subunit zeta (535 aa).

It belongs to the TCP-1 chaperonin family. As to quaternary structure, heterooligomeric complex of about 850 to 900 kDa that forms two stacked rings, 12 to 16 nm in diameter.

The protein localises to the cytoplasm. Its function is as follows. Molecular chaperone; assists the folding of proteins upon ATP hydrolysis. Known to play a role, in vitro, in the folding of actin and tubulin. The polypeptide is T-complex protein 1 subunit zeta (cct6) (Schizosaccharomyces pombe (strain 972 / ATCC 24843) (Fission yeast)).